The sequence spans 99 residues: Nucleoid-associated protein EbfC (99 aa).

The protein belongs to the YbaB/EbfC family. In terms of assembly, homodimer.

It localises to the cytoplasm. The protein resides in the nucleoid. Functionally, binds to DNA and alters its conformation. May be involved in regulation of gene expression, nucleoid organization and DNA protection. In Borreliella burgdorferi (strain ZS7) (Borrelia burgdorferi), this protein is Nucleoid-associated protein EbfC.